A 2194-amino-acid polypeptide reads, in one-letter code: Genome polyprotein (2194 aa).

The N-myristoyl glycine; by host moiety is linked to residue glycine 2. At 2-1504 (GAQVSTQKTG…HVSRAFICLQ (1503 aa)) the chain is on the cytoplasmic side. The segment at 566 to 582 (LYQNDPEGALNKAVGRV) is amphipathic alpha-helix. Catalysis depends on for protease 2A activity residues histidine 881 and aspartate 899. Cysteine 916 and cysteine 918 together coordinate Zn(2+). Cysteine 970 functions as the For protease 2A activity in the catalytic mechanism. Zn(2+)-binding residues include cysteine 976 and histidine 978. The interval 1110-1182 (NNNWLKKFTE…EQSAPSQSDQ (73 aa)) is membrane-binding. The oligomerization stretch occupies residues 1110-1248 (NNNWLKKFTE…SPGAGKSVAT (139 aa)). The segment at 1131–1135 (AIKIQ) is RNA-binding. The region spanning 1214 to 1370 (EKKMSNYIQF…SMYSQNGKIN (157 aa)) is the SF3 helicase domain. Positions 1378, 1390, and 1395 each coordinate Zn(2+). Residues 1378–1395 (CDEECCPVNFKRCCPLVC) form a C4-type; degenerate zinc finger. The segment at 1422 to 1429 (EYNHRHSV) is RNA-binding. Residues 1433–1438 (LEALFQ) form an oligomerization region. An intramembrane segment occupies 1505 to 1520 (ALTTFVSVAGIIYIIY). At 1521–2194 (KLFAGFQGAY…TLRRKWLDSF (674 aa)) the chain is on the cytoplasmic side. Tyrosine 1530 is modified (O-(5'-phospho-RNA)-tyrosine). One can recognise a Peptidase C3 domain in the interval 1550–1728 (GPAFEFAVAM…FSAALLRHYF (179 aa)). Residues histidine 1589, glutamate 1620, and cysteine 1696 each act as for protease 3C activity in the active site. One can recognise a RdRp catalytic domain in the interval 1959–2075 (GHLIAFDYSG…SYPHPIDASL (117 aa)). Residues aspartate 1965 and aspartate 2061 each contribute to the Mg(2+) site.

It belongs to the picornaviruses polyprotein family. In terms of assembly, interacts with capsid protein VP1 and capsid protein VP3 to form heterotrimeric protomers. Interacts with capsid protein VP0, and capsid protein VP3 to form heterotrimeric protomers. Five protomers subsequently associate to form pentamers which serve as building blocks for the capsid. Interacts with capsid protein VP2, capsid protein VP3 and capsid protein VP4 following cleavage of capsid protein VP0. As to quaternary structure, interacts with capsid protein VP1 and capsid protein VP3 in the mature capsid. In terms of assembly, interacts with capsid protein VP0 and capsid protein VP1 to form heterotrimeric protomers. Five protomers subsequently associate to form pentamers which serve as building blocks for the capsid. Interacts with capsid protein VP4 in the mature capsid. Interacts with protein 2C; this interaction may be important for virion morphogenesis. Interacts with capsid protein VP1 and capsid protein VP3. As to quaternary structure, homodimer. In terms of assembly, homohexamer; forms a hexameric ring structure with 6-fold symmetry characteristic of AAA+ ATPases. Interacts (via N-terminus) with host RTN3 (via reticulon domain); this interaction is important for viral replication. Interacts with capsid protein VP3; this interaction may be important for virion morphogenesis. Interacts with protein 3CD. As to quaternary structure, homodimer. Interacts with host GBF1. Interacts (via GOLD domain) with host ACBD3 (via GOLD domain); this interaction allows the formation of a viral protein 3A/ACBD3 heterotetramer with a 2:2 stoichiometry, which will stimulate the recruitment of host PI4KB in order to synthesize PI4P at the viral RNA replication sites. In terms of assembly, interacts with RNA-directed RNA polymerase. Interacts with protein 3AB and with RNA-directed RNA polymerase. As to quaternary structure, interacts with Viral protein genome-linked and with protein 3CD. It depends on Mg(2+) as a cofactor. In terms of processing, specific enzymatic cleavages in vivo by the viral proteases yield processing intermediates and the mature proteins. Post-translationally, myristoylation is required for the formation of pentamers during virus assembly. Further assembly of 12 pentamers and a molecule of genomic RNA generates the provirion. During virion maturation, immature virions are rendered infectious following cleavage of VP0 into VP4 and VP2. This maturation seems to be an autocatalytic event triggered by the presence of RNA in the capsid and it is followed by a conformational change infectious virion. In terms of processing, myristoylation is required during RNA encapsidation and formation of the mature virus particle. Post-translationally, VPg is uridylylated by the polymerase into VPg-pUpU. This acts as a nucleotide-peptide primer for the genomic RNA replication.

It is found in the virion. It localises to the host cytoplasm. The protein resides in the host cytoplasmic vesicle membrane. Its subcellular location is the host nucleus. It catalyses the reaction a ribonucleoside 5'-triphosphate + H2O = a ribonucleoside 5'-diphosphate + phosphate + H(+). The catalysed reaction is Selective cleavage of Tyr-|-Gly bond in the picornavirus polyprotein.. The enzyme catalyses RNA(n) + a ribonucleoside 5'-triphosphate = RNA(n+1) + diphosphate. It carries out the reaction Selective cleavage of Gln-|-Gly bond in the poliovirus polyprotein. In other picornavirus reactions Glu may be substituted for Gln, and Ser or Thr for Gly.. With respect to regulation, replication or transcription is subject to high level of random mutations by the nucleotide analog ribavirin. Functionally, forms an icosahedral capsid of pseudo T=3 symmetry with capsid proteins VP2 and VP3. The capsid is 300 Angstroms in diameter, composed of 60 copies of each capsid protein and enclosing the viral positive strand RNA genome. Capsid protein VP1 mainly forms the vertices of the capsid. Capsid protein VP1 interacts with host cell receptor to provide virion attachment to target host cells. This attachment induces virion internalization. Tyrosine kinases are probably involved in the entry process. After binding to its receptor, the capsid undergoes conformational changes. Capsid protein VP1 N-terminus (that contains an amphipathic alpha-helix) and capsid protein VP4 are externalized. Together, they shape a pore in the host membrane through which viral genome is translocated to host cell cytoplasm. In terms of biological role, forms an icosahedral capsid of pseudo T=3 symmetry with capsid proteins VP2 and VP3. The capsid is 300 Angstroms in diameter, composed of 60 copies of each capsid protein and enclosing the viral positive strand RNA genome. Its function is as follows. Lies on the inner surface of the capsid shell. After binding to the host receptor, the capsid undergoes conformational changes. Capsid protein VP4 is released, Capsid protein VP1 N-terminus is externalized, and together, they shape a pore in the host membrane through which the viral genome is translocated into the host cell cytoplasm. Component of immature procapsids, which is cleaved into capsid proteins VP4 and VP2 after maturation. Allows the capsid to remain inactive before the maturation step. Functionally, cysteine protease that cleaves viral polyprotein and specific host proteins. It is responsible for the autocatalytic cleavage between the P1 and P2 regions, which is the first cleavage occurring in the polyprotein. Also cleaves the host translation initiation factor EIF4G1, in order to shut down the capped cellular mRNA translation. Inhibits the host nucleus-cytoplasm protein and RNA trafficking by cleaving host members of the nuclear pores. Counteracts stress granule formation probably by antagonizing its assembly or promoting its dissassembly. In terms of biological role, plays an essential role in the virus replication cycle by acting as a viroporin. Creates a pore in the host endoplasmic reticulum and as a consequence releases Ca2+ in the cytoplasm of infected cell. In turn, high levels of cytoplasmic calcium may trigger membrane trafficking and transport of viral ER-associated proteins to viroplasms, sites of viral genome replication. Its function is as follows. Induces and associates with structural rearrangements of intracellular membranes. Displays RNA-binding, nucleotide binding and NTPase activities. May play a role in virion morphogenesis and viral RNA encapsidation by interacting with the capsid protein VP3. Localizes the viral replication complex to the surface of membranous vesicles. Together with protein 3CD binds the Cis-Active RNA Element (CRE) which is involved in RNA synthesis initiation. Acts as a cofactor to stimulate the activity of 3D polymerase, maybe through a nucleid acid chaperone activity. Functionally, localizes the viral replication complex to the surface of membranous vesicles. It inhibits host cell endoplasmic reticulum-to-Golgi apparatus transport and causes the disassembly of the Golgi complex, possibly through GBF1 interaction. This would result in depletion of MHC, trail receptors and IFN receptors at the host cell surface. Plays an essential role in viral RNA replication by recruiting ACBD3 and PI4KB at the viral replication sites, thereby allowing the formation of the rearranged membranous structures where viral replication takes place. In terms of biological role, acts as a primer for viral RNA replication and remains covalently bound to viral genomic RNA. VPg is uridylylated prior to priming replication into VPg-pUpU. The oriI viral genomic sequence may act as a template for this. The VPg-pUpU is then used as primer on the genomic RNA poly(A) by the RNA-dependent RNA polymerase to replicate the viral genome. During genome replication, the VPg-RNA linkage is removed by the host TDP2, thereby accelerating replication. During the late stage of the replication cycle, host TDP2 is excluded from sites of viral RNA synthesis and encapsidation, allowing for the generation of progeny virions. Its function is as follows. Involved in the viral replication complex and viral polypeptide maturation. It exhibits protease activity with a specificity and catalytic efficiency that is different from protease 3C. Protein 3CD lacks polymerase activity. Protein 3CD binds to the 5'UTR of the viral genome. Replicates the viral genomic RNA on the surface of intracellular membranes. May form linear arrays of subunits that propagate along a strong head-to-tail interaction called interface-I. Covalently attaches UMP to a tyrosine of VPg, which is used to prime RNA synthesis. The positive stranded RNA genome is first replicated at virus induced membranous vesicles, creating a dsRNA genomic replication form. This dsRNA is then used as template to synthesize positive stranded RNA genomes. ss(+)RNA genomes are either translated, replicated or encapsidated. Functionally, major viral protease that mediates proteolytic processing of the polyprotein. Cleaves host EIF5B, contributing to host translation shutoff. Also cleaves host PABPC1, contributing to host translation shutoff. Cleaves host NLRP1, triggers host N-glycine-mediated degradation of the autoinhibitory NLRP1 N-terminal fragment. This is Genome polyprotein from Homo sapiens (Human).